Here is a 105-residue protein sequence, read N- to C-terminus: Wound-induced protein 1 (105 aa).

This sequence to potato anionic peroxidase. Ubiquitous.

The chain is Wound-induced protein 1 (WUN1) from Solanum tuberosum (Potato).